The primary structure comprises 263 residues: Acyl-[acyl-carrier-protein]--UDP-N-acetylglucosamine O-acyltransferase (263 aa).

This sequence belongs to the transferase hexapeptide repeat family. LpxA subfamily. In terms of assembly, homotrimer.

The protein localises to the cytoplasm. The enzyme catalyses a (3R)-hydroxyacyl-[ACP] + UDP-N-acetyl-alpha-D-glucosamine = a UDP-3-O-[(3R)-3-hydroxyacyl]-N-acetyl-alpha-D-glucosamine + holo-[ACP]. Its pathway is glycolipid biosynthesis; lipid IV(A) biosynthesis; lipid IV(A) from (3R)-3-hydroxytetradecanoyl-[acyl-carrier-protein] and UDP-N-acetyl-alpha-D-glucosamine: step 1/6. In terms of biological role, involved in the biosynthesis of lipid A, a phosphorylated glycolipid that anchors the lipopolysaccharide to the outer membrane of the cell. The chain is Acyl-[acyl-carrier-protein]--UDP-N-acetylglucosamine O-acyltransferase from Caulobacter vibrioides (strain ATCC 19089 / CIP 103742 / CB 15) (Caulobacter crescentus).